The primary structure comprises 204 residues: Protein GrpE (204 aa).

The disordered stretch occupies residues 1-52; it reads MSSKNNPESETKAKNKWEKVMEAEEEQEEGGGDGSQEMEPHREGLEFPSREK. Composition is skewed to basic and acidic residues over residues 7–22 and 38–52; these read PESETKAKNKWEKVME and MEPHREGLEFPSREK.

It belongs to the GrpE family. In terms of assembly, homodimer.

The protein resides in the cytoplasm. Participates actively in the response to hyperosmotic and heat shock by preventing the aggregation of stress-denatured proteins, in association with DnaK and GrpE. It is the nucleotide exchange factor for DnaK and may function as a thermosensor. Unfolded proteins bind initially to DnaJ; upon interaction with the DnaJ-bound protein, DnaK hydrolyzes its bound ATP, resulting in the formation of a stable complex. GrpE releases ADP from DnaK; ATP binding to DnaK triggers the release of the substrate protein, thus completing the reaction cycle. Several rounds of ATP-dependent interactions between DnaJ, DnaK and GrpE are required for fully efficient folding. In Coxiella burnetii (strain Dugway 5J108-111), this protein is Protein GrpE.